Reading from the N-terminus, the 137-residue chain is UBAP1-MVB12-associated (UMA)-domain containing protein 1 (137 aa).

Positions 1 to 72 are disordered; the sequence is MFHFFRKPPE…VSDPEMENKA (72 aa). Positions 32–44 are enriched in basic and acidic residues; it reads DEQRMTARGKTSD. Polar residues predominate over residues 50-63; it reads PLETNKENSSSVTV. In terms of domain architecture, UMA spans 86 to 134; it reads LSDVPFTLAPHVLAVQGTITDLPDHLLSYDGSENLSRFWYDFTLENSVL.

This Homo sapiens (Human) protein is UBAP1-MVB12-associated (UMA)-domain containing protein 1.